Reading from the N-terminus, the 474-residue chain is Adenosylhomocysteinase (474 aa).

Residues T61, D136, and E196 each contribute to the substrate site. 197 to 199 (TTT) serves as a coordination point for NAD(+). Residues K226 and D230 each coordinate substrate. NAD(+)-binding positions include N231, 260–265 (GYGDVG), E283, N318, 339–341 (IGH), and N384.

The protein belongs to the adenosylhomocysteinase family. NAD(+) serves as cofactor.

Its subcellular location is the cytoplasm. It catalyses the reaction S-adenosyl-L-homocysteine + H2O = L-homocysteine + adenosine. Its pathway is amino-acid biosynthesis; L-homocysteine biosynthesis; L-homocysteine from S-adenosyl-L-homocysteine: step 1/1. Functionally, may play a key role in the regulation of the intracellular concentration of adenosylhomocysteine. The chain is Adenosylhomocysteinase from Ralstonia pickettii (strain 12J).